The chain runs to 136 residues: Active regulator of SIRT1 (136 aa).

Residue arginine 7 is modified to Citrulline. Residues 13-58 (LAASEAPRDPPGQAKPRGAPVKRPRKTKAIQAQKLRNSAKGKVPKS) form a disordered region. Serine 84 carries the post-translational modification Phosphoserine.

Belongs to the AROS family. In terms of assembly, part of the small subunit (SSU) processome, composed of more than 70 proteins and the RNA chaperone small nucleolar RNA (snoRNA) U3. Interacts with RPS19; the interaction is direct and mediates the integration of RPS19 in state post-A1. Interacts with SIRT1. Post-translationally, citrullinated by PADI4. As to expression, widely expressed (at protein level).

The protein localises to the nucleus. Its subcellular location is the nucleolus. Its function is as follows. Part of the small subunit (SSU) processome, first precursor of the small eukaryotic ribosomal subunit. During the assembly of the SSU processome in the nucleolus, many ribosome biogenesis factors, an RNA chaperone and ribosomal proteins associate with the nascent pre-rRNA and work in concert to generate RNA folding, modifications, rearrangements and cleavage as well as targeted degradation of pre-ribosomal RNA by the RNA exosome. Acts as a chaperone that specifically mediates the integration of RPS19 in state post-A1. Direct regulator of SIRT1. Enhances SIRT1-mediated deacetylation of p53/TP53, thereby participating in inhibition of p53/TP53-mediated transcriptional activity. The polypeptide is Active regulator of SIRT1 (Homo sapiens (Human)).